We begin with the raw amino-acid sequence, 348 residues long: Putative S-adenosyl-L-methionine-dependent methyltransferase Mb3432 (348 aa).

Residues D171 and D200–L201 each bind S-adenosyl-L-methionine.

The protein belongs to the UPF0677 family.

Functionally, exhibits S-adenosyl-L-methionine-dependent methyltransferase activity. The sequence is that of Putative S-adenosyl-L-methionine-dependent methyltransferase Mb3432 from Mycobacterium bovis (strain ATCC BAA-935 / AF2122/97).